A 100-amino-acid chain; its full sequence is NADH-quinone oxidoreductase subunit K (100 aa).

The next 3 membrane-spanning stretches (helical) occupy residues 4–24 (LQHG…GLVI), 28–48 (LLFM…AFVV), and 60–80 (VMYI…LALL).

This sequence belongs to the complex I subunit 4L family. As to quaternary structure, NDH-1 is composed of 13 different subunits. Subunits NuoA, H, J, K, L, M, N constitute the membrane sector of the complex.

Its subcellular location is the cell inner membrane. The enzyme catalyses a quinone + NADH + 5 H(+)(in) = a quinol + NAD(+) + 4 H(+)(out). In terms of biological role, NDH-1 shuttles electrons from NADH, via FMN and iron-sulfur (Fe-S) centers, to quinones in the respiratory chain. The immediate electron acceptor for the enzyme in this species is believed to be ubiquinone. Couples the redox reaction to proton translocation (for every two electrons transferred, four hydrogen ions are translocated across the cytoplasmic membrane), and thus conserves the redox energy in a proton gradient. This chain is NADH-quinone oxidoreductase subunit K, found in Shigella boydii serotype 18 (strain CDC 3083-94 / BS512).